The primary structure comprises 83 residues: MSSGGLLLLLGLLTFCAELTPVSSRKRHPYCNLPPDPGPCHDNKFAFYHHPASNKCKEFVYGGCGGNDNRFKTRNKCQCTCSG.

Residues 1-24 form the signal peptide; the sequence is MSSGGLLLLLGLLTFCAELTPVSS. The BPTI/Kunitz inhibitor domain occupies 31–81; the sequence is CNLPPDPGPCHDNKFAFYHHPASNKCKEFVYGGCGGNDNRFKTRNKCQCTC. Intrachain disulfides connect C31–C81, C40–C64, and C56–C77.

It belongs to the venom Kunitz-type family. In terms of assembly, heterodimer; disulfide-linked. The A chains have phospholipase A2 activity and the B chains show homology with the basic protease inhibitors. In terms of tissue distribution, expressed by the venom gland.

It localises to the secreted. In terms of biological role, beta-bungarotoxins are presynaptic neurotoxins of the venom. The B chain is homologous to venom basic protease inhibitors but has no protease inhibitor activity and blocks voltage-gated potassium channels (Kv). The protein is Kunitz-type serine protease inhibitor homolog beta-bungarotoxin B5 chain of Bungarus multicinctus (Many-banded krait).